Reading from the N-terminus, the 663-residue chain is Oxytetracycline resistance protein (663 aa).

One can recognise a tr-type G domain in the interval 1 to 252; sequence MNKLNLGILA…GIRELLPSVH (252 aa). Residues 10–17, 74–78, and 128–131 each bind GTP; these read AHVDAGKT, DTPGH, and NKID.

It belongs to the TRAFAC class translation factor GTPase superfamily. Classic translation factor GTPase family. TetM/TetO subfamily.

Its function is as follows. Abolishes the inhibitory effect of oxytetracycline on protein synthesis by a non-covalent modification of the ribosomes. The sequence is that of Oxytetracycline resistance protein (otrA) from Streptomyces rimosus.